The chain runs to 469 residues: UDP-N-acetylmuramate--L-alanine ligase (469 aa).

Residue 113 to 119 (GTHGKTT) participates in ATP binding.

It belongs to the MurCDEF family.

It is found in the cytoplasm. The enzyme catalyses UDP-N-acetyl-alpha-D-muramate + L-alanine + ATP = UDP-N-acetyl-alpha-D-muramoyl-L-alanine + ADP + phosphate + H(+). The protein operates within cell wall biogenesis; peptidoglycan biosynthesis. Its function is as follows. Cell wall formation. This is UDP-N-acetylmuramate--L-alanine ligase from Neisseria meningitidis serogroup B (strain ATCC BAA-335 / MC58).